The sequence spans 368 residues: Aminomethyltransferase (368 aa).

It belongs to the GcvT family. As to quaternary structure, the glycine cleavage system is composed of four proteins: P, T, L and H.

It catalyses the reaction N(6)-[(R)-S(8)-aminomethyldihydrolipoyl]-L-lysyl-[protein] + (6S)-5,6,7,8-tetrahydrofolate = N(6)-[(R)-dihydrolipoyl]-L-lysyl-[protein] + (6R)-5,10-methylene-5,6,7,8-tetrahydrofolate + NH4(+). The glycine cleavage system catalyzes the degradation of glycine. The protein is Aminomethyltransferase of Xylella fastidiosa (strain M23).